A 422-amino-acid chain; its full sequence is Serine--tRNA ligase (422 aa).

231–233 contributes to the L-serine binding site; it reads TSE. ATP is bound at residue 262–264; it reads RQE. E285 lines the L-serine pocket. 349–352 provides a ligand contact to ATP; the sequence is EISS. S384 provides a ligand contact to L-serine.

Belongs to the class-II aminoacyl-tRNA synthetase family. Type-1 seryl-tRNA synthetase subfamily. In terms of assembly, homodimer. The tRNA molecule binds across the dimer.

Its subcellular location is the cytoplasm. It catalyses the reaction tRNA(Ser) + L-serine + ATP = L-seryl-tRNA(Ser) + AMP + diphosphate + H(+). It carries out the reaction tRNA(Sec) + L-serine + ATP = L-seryl-tRNA(Sec) + AMP + diphosphate + H(+). It functions in the pathway aminoacyl-tRNA biosynthesis; selenocysteinyl-tRNA(Sec) biosynthesis; L-seryl-tRNA(Sec) from L-serine and tRNA(Sec): step 1/1. Functionally, catalyzes the attachment of serine to tRNA(Ser). Is also able to aminoacylate tRNA(Sec) with serine, to form the misacylated tRNA L-seryl-tRNA(Sec), which will be further converted into selenocysteinyl-tRNA(Sec). In Mycoplasma mycoides subsp. mycoides SC (strain CCUG 32753 / NCTC 10114 / PG1), this protein is Serine--tRNA ligase.